Here is a 413-residue protein sequence, read N- to C-terminus: Ribosomal RNA large subunit methyltransferase G (413 aa).

The segment at 389 to 413 (EAEVEQAFDTETPHPQSALYGKPKA) is disordered.

This sequence belongs to the methyltransferase superfamily. RlmG family.

It localises to the cytoplasm. It carries out the reaction guanosine(1835) in 23S rRNA + S-adenosyl-L-methionine = N(2)-methylguanosine(1835) in 23S rRNA + S-adenosyl-L-homocysteine + H(+). In terms of biological role, specifically methylates the guanine in position 1835 (m2G1835) of 23S rRNA. The chain is Ribosomal RNA large subunit methyltransferase G from Shewanella pealeana (strain ATCC 700345 / ANG-SQ1).